The primary structure comprises 681 residues: Sodium-dependent phosphate transporter 1 (681 aa).

Helical transmembrane passes span 25-45, 66-86, 106-126, 162-182, 201-221, and 234-254; these read NLWM…SVGA, ACIL…AKVS, LMAG…VASF, IVMS…ILFF, ALPI…MYTG, and GTIL…WFFV. The tract at residues 266 to 295 is disordered; the sequence is VKSSPSESPLMEKKNNLKDHEETKMAPGDV. Residues serine 269 and serine 273 each carry the phosphoserine modification. A compositionally biased stretch (basic and acidic residues) spans 275 to 289; that stretch reads LMEKKNNLKDHEETK. 4 helical membrane-spanning segments follow: residues 513–533, 561–581, 602–622, and 652–672; these read VSLL…FAHG, ATPI…LWVW, FSIE…GLPI, and IFMA…AIMA.

The protein belongs to the inorganic phosphate transporter (PiT) (TC 2.A.20) family. Ubiquitously expressed.

It is found in the cell membrane. The enzyme catalyses 2 Na(+)(out) + phosphate(out) = 2 Na(+)(in) + phosphate(in). Functionally, sodium-phosphate symporter which preferentially transports the monovalent form of phosphate with a stoichiometry of two sodium ions per phosphate ion. May play a role in extracellular matrix and cartilage calcification as well as in vascular calcification. Essential for cell proliferation but this function is independent of its phosphate transporter activity. This Rattus norvegicus (Rat) protein is Sodium-dependent phosphate transporter 1 (Slc20a1).